The chain runs to 326 residues: Flap endonuclease 1 (326 aa).

The segment at 1 to 100 (MGNAALRQLA…EEVQERRVAR (100 aa)) is N-domain. Residues Asp-28, Asp-82, Glu-154, Glu-156, Asp-175, Asp-177, and Asp-225 each contribute to the Mg(2+) site. The interval 118-246 (AASRLEARTQ…TAISAINDHG (129 aa)) is I-domain. The tract at residues 318 to 326 (VQTGLDEWI) is interaction with PCNA.

The protein belongs to the XPG/RAD2 endonuclease family. FEN1 subfamily. In terms of assembly, interacts with PCNA. PCNA stimulates the nuclease activity without altering cleavage specificity. Mg(2+) is required as a cofactor.

Its function is as follows. Structure-specific nuclease with 5'-flap endonuclease and 5'-3' exonuclease activities involved in DNA replication and repair. During DNA replication, cleaves the 5'-overhanging flap structure that is generated by displacement synthesis when DNA polymerase encounters the 5'-end of a downstream Okazaki fragment. Binds the unpaired 3'-DNA end and kinks the DNA to facilitate 5' cleavage specificity. Cleaves one nucleotide into the double-stranded DNA from the junction in flap DNA, leaving a nick for ligation. Also involved in the base excision repair (BER) pathway. Acts as a genome stabilization factor that prevents flaps from equilibrating into structures that lead to duplications and deletions. Also possesses 5'-3' exonuclease activity on nicked or gapped double-stranded DNA. The protein is Flap endonuclease 1 of Haloquadratum walsbyi (strain DSM 16790 / HBSQ001).